The chain runs to 268 residues: Indole-3-glycerol phosphate synthase (268 aa).

This sequence belongs to the TrpC family.

The enzyme catalyses 1-(2-carboxyphenylamino)-1-deoxy-D-ribulose 5-phosphate + H(+) = (1S,2R)-1-C-(indol-3-yl)glycerol 3-phosphate + CO2 + H2O. It functions in the pathway amino-acid biosynthesis; L-tryptophan biosynthesis; L-tryptophan from chorismate: step 4/5. The chain is Indole-3-glycerol phosphate synthase from Acinetobacter baumannii (strain SDF).